The following is an 81-amino-acid chain: Cytochrome b559 subunit alpha (81 aa).

The helical transmembrane segment at 21-35 (VIHSITIPMLFIAGW) threads the bilayer. H23 contacts heme.

The protein belongs to the PsbE/PsbF family. In terms of assembly, heterodimer of an alpha subunit and a beta subunit. PSII is composed of 1 copy each of membrane proteins PsbA, PsbB, PsbC, PsbD, PsbE, PsbF, PsbH, PsbI, PsbJ, PsbK, PsbL, PsbM, PsbT, PsbX, PsbY, PsbZ, Psb30/Ycf12, peripheral proteins PsbO, CyanoQ (PsbQ), PsbU, PsbV and a large number of cofactors. It forms dimeric complexes. Heme b is required as a cofactor.

It is found in the cellular thylakoid membrane. This b-type cytochrome is tightly associated with the reaction center of photosystem II (PSII). PSII is a light-driven water:plastoquinone oxidoreductase that uses light energy to abstract electrons from H(2)O, generating O(2) and a proton gradient subsequently used for ATP formation. It consists of a core antenna complex that captures photons, and an electron transfer chain that converts photonic excitation into a charge separation. This Crocosphaera subtropica (strain ATCC 51142 / BH68) (Cyanothece sp. (strain ATCC 51142)) protein is Cytochrome b559 subunit alpha.